The primary structure comprises 101 residues: Trp operon repressor homolog (101 aa).

The DNA-binding element occupies 59 to 82 (QREIQQNLNTSAATITRGSNMIKT).

This sequence belongs to the TrpR family. In terms of assembly, homodimer.

It is found in the cytoplasm. Its function is as follows. This protein is an aporepressor. When complexed with L-tryptophan it binds the operator region of the trp operon and prevents the initiation of transcription. This Haemophilus influenzae (strain 86-028NP) protein is Trp operon repressor homolog.